A 407-amino-acid polypeptide reads, in one-letter code: Arginine deiminase (407 aa).

The active-site Amidino-cysteine intermediate is the cysteine 397.

The protein belongs to the arginine deiminase family.

Its subcellular location is the cytoplasm. It carries out the reaction L-arginine + H2O = L-citrulline + NH4(+). Its pathway is amino-acid degradation; L-arginine degradation via ADI pathway; carbamoyl phosphate from L-arginine: step 1/2. In Escherichia coli O6:H1 (strain CFT073 / ATCC 700928 / UPEC), this protein is Arginine deiminase (arcA).